The chain runs to 460 residues: Argininosuccinate lyase (460 aa).

It belongs to the lyase 1 family. Argininosuccinate lyase subfamily.

It localises to the cytoplasm. It carries out the reaction 2-(N(omega)-L-arginino)succinate = fumarate + L-arginine. Its pathway is amino-acid biosynthesis; L-arginine biosynthesis; L-arginine from L-ornithine and carbamoyl phosphate: step 3/3. This Pelotomaculum thermopropionicum (strain DSM 13744 / JCM 10971 / SI) protein is Argininosuccinate lyase.